The primary structure comprises 284 residues: MASENQKLSSVALTPVEATDYAENTATYKANKRPFLSFMSGISAGACIALAFVFYTTTQTASAGAPWGLTKLVGGLVFSLGVIMVVILGSELFTSSTLTLVARVGGRITTTQMIRNWIVVYLGNFVGGLFIAAVIWFSGQTMAANGQWGLTILATAQHKIHHTWFEAFNLGILCNIMVCVAVWMSYSGKTVTDKAFIMIMPIGLFVASGFEHCVANMFMIPMGIITAHFSTPEFWQQIGVDPMKYADLDLYHFIVKNLIPVTLGNIVGGAICIGVFQRYLTKTH.

Topologically, residues 1–34 are cytoplasmic; it reads MASENQKLSSVALTPVEATDYAENTATYKANKRP. The chain crosses the membrane as a helical span at residues 35–55; it reads FLSFMSGISAGACIALAFVFY. At 56-72 the chain is on the periplasmic side; sequence TTTQTASAGAPWGLTKL. A helical transmembrane segment spans residues 73–93; the sequence is VGGLVFSLGVIMVVILGSELF. Residues 94 to 116 lie on the Cytoplasmic side of the membrane; it reads TSSTLTLVARVGGRITTTQMIRN. Residues 117 to 137 traverse the membrane as a helical segment; the sequence is WIVVYLGNFVGGLFIAAVIWF. The Periplasmic segment spans residues 138-163; the sequence is SGQTMAANGQWGLTILATAQHKIHHT. The chain crosses the membrane as a helical span at residues 164–184; it reads WFEAFNLGILCNIMVCVAVWM. Over 185–194 the chain is Cytoplasmic; it reads SYSGKTVTDK. The helical transmembrane segment at 195–215 threads the bilayer; the sequence is AFIMIMPIGLFVASGFEHCVA. The Periplasmic segment spans residues 216 to 252; the sequence is NMFMIPMGIITAHFSTPEFWQQIGVDPMKYADLDLYH. Residues 253–273 traverse the membrane as a helical segment; the sequence is FIVKNLIPVTLGNIVGGAICI. The Cytoplasmic portion of the chain corresponds to 274-284; it reads GVFQRYLTKTH.

This sequence belongs to the FNT transporter (TC 1.A.16) family. As to quaternary structure, homopentamer.

It localises to the cell inner membrane. The enzyme catalyses formate(in) = formate(out). In terms of biological role, involved in the bidirectional transport of formate during mixed-acid fermentation. Functions to maintain relatively constant intracellular formate levels during growth, using different mechanisms for efflux and uptake of the anion. The polypeptide is Formate channel FocA (focA) (Haemophilus influenzae (strain ATCC 51907 / DSM 11121 / KW20 / Rd)).